Reading from the N-terminus, the 539-residue chain is D-mannonate oxidoreductase (539 aa).

39–50 (WVHFGGGNIFRG) lines the NAD(+) pocket.

The protein belongs to the mannitol dehydrogenase family. UxuB subfamily.

It carries out the reaction D-mannonate + NAD(+) = keto-D-fructuronate + NADH + H(+). It functions in the pathway carbohydrate metabolism. Catalyzes the reduction of D-fructuronate (D-FruA) to D-mannonate (D-ManA). The polypeptide is D-mannonate oxidoreductase (Thermotoga maritima (strain ATCC 43589 / DSM 3109 / JCM 10099 / NBRC 100826 / MSB8)).